The sequence spans 91 residues: uncharacterized protein (91 aa).

The next 2 membrane-spanning stretches (helical) occupy residues 5 to 27 (FFKY…TNFQ) and 47 to 69 (DFYH…FIFF).

The protein localises to the cell membrane. This is an uncharacterized protein from Archaeoglobus fulgidus (strain ATCC 49558 / DSM 4304 / JCM 9628 / NBRC 100126 / VC-16).